Here is a 488-residue protein sequence, read N- to C-terminus: Glutamate--tRNA ligase (488 aa).

The 'HIGH' region signature appears at 8 to 18; sequence PSPTGPLHIGG. C105, C107, C132, and H134 together coordinate Zn(2+). Residues 249 to 253 carry the 'KMSKS' region motif; the sequence is KMSKR. K252 provides a ligand contact to ATP.

It belongs to the class-I aminoacyl-tRNA synthetase family. Glutamate--tRNA ligase type 1 subfamily. As to quaternary structure, monomer. Zn(2+) is required as a cofactor.

Its subcellular location is the cytoplasm. The enzyme catalyses tRNA(Glu) + L-glutamate + ATP = L-glutamyl-tRNA(Glu) + AMP + diphosphate. Its function is as follows. Catalyzes the attachment of glutamate to tRNA(Glu) in a two-step reaction: glutamate is first activated by ATP to form Glu-AMP and then transferred to the acceptor end of tRNA(Glu). The chain is Glutamate--tRNA ligase from Desulfitobacterium hafniense (strain Y51).